The following is a 195-amino-acid chain: UPF0316 protein Pcar_2434 (195 aa).

Helical transmembrane passes span 13 to 33 (LFLL…IGTL), 45 to 65 (WAGV…SQVM), and 71 to 91 (VWTY…GVLI).

This sequence belongs to the UPF0316 family.

It localises to the cell membrane. The sequence is that of UPF0316 protein Pcar_2434 from Syntrophotalea carbinolica (strain DSM 2380 / NBRC 103641 / GraBd1) (Pelobacter carbinolicus).